The sequence spans 350 residues: Selenide, water dikinase (350 aa).

The active site involves Cys17. ATP is bound by residues Lys20 and 48–50 (LFD). Mg(2+) is bound at residue Asp51. Residues Asp68, Asp91, and 139–141 (GHS) each bind ATP. Asp91 contacts Mg(2+). Mg(2+) is bound at residue Asp229.

The protein belongs to the selenophosphate synthase 1 family. Class I subfamily. In terms of assembly, homodimer. Mg(2+) is required as a cofactor.

It carries out the reaction hydrogenselenide + ATP + H2O = selenophosphate + AMP + phosphate + 2 H(+). Synthesizes selenophosphate from selenide and ATP. The sequence is that of Selenide, water dikinase from Bdellovibrio bacteriovorus (strain ATCC 15356 / DSM 50701 / NCIMB 9529 / HD100).